A 205-amino-acid polypeptide reads, in one-letter code: Methylthioribulose-1-phosphate dehydratase (205 aa).

Residues H96 and H98 each coordinate Zn(2+).

It belongs to the aldolase class II family. MtnB subfamily. Zn(2+) is required as a cofactor.

It carries out the reaction 5-(methylsulfanyl)-D-ribulose 1-phosphate = 5-methylsulfanyl-2,3-dioxopentyl phosphate + H2O. It functions in the pathway amino-acid biosynthesis; L-methionine biosynthesis via salvage pathway; L-methionine from S-methyl-5-thio-alpha-D-ribose 1-phosphate: step 2/6. Catalyzes the dehydration of methylthioribulose-1-phosphate (MTRu-1-P) into 2,3-diketo-5-methylthiopentyl-1-phosphate (DK-MTP-1-P). This chain is Methylthioribulose-1-phosphate dehydratase, found in Pseudomonas aeruginosa (strain UCBPP-PA14).